The following is a 439-amino-acid chain: Serine/threonine-protein kinase 2 (439 aa).

The Protein kinase domain occupies 87–439; it reads NDDFYHISTG…IFSDWINGRN (353 aa). Residues 93–101 and Lys-117 contribute to the ATP site; that span reads ISTGGYGIV. Asp-307 functions as the Proton acceptor in the catalytic mechanism.

This sequence belongs to the protein kinase superfamily. Ser/Thr protein kinase family. Poxviruses subfamily. In terms of processing, phosphorylated in vivo. Autophosphorylated in vitro.

The protein resides in the host endoplasmic reticulum. The protein localises to the host endoplasmic reticulum-Golgi intermediate compartment. The catalysed reaction is L-seryl-[protein] + ATP = O-phospho-L-seryl-[protein] + ADP + H(+). The enzyme catalyses L-threonyl-[protein] + ATP = O-phospho-L-threonyl-[protein] + ADP + H(+). Essential serine-protein kinase involved in the early stage of virion morphogenesis. The chain is Serine/threonine-protein kinase 2 (OPG054) from Homo sapiens (Human).